A 491-amino-acid chain; its full sequence is GTPase Der (491 aa).

EngA-type G domains lie at 3-166 and 200-373; these read PVVA…AEAM and IKLA…DSAT. GTP contacts are provided by residues 9–16, 56–60, 118–121, 206–213, 253–257, and 318–321; these read GRPNVGKS, DTGGI, NKVD, GKPNVGKS, DTAGV, and NKWD. Positions 374 to 458 constitute a KH-like domain; it reads RRVSTSMLTR…PIQIRFQEGD (85 aa). Positions 472 to 491 are disordered; sequence QERRRKRALSHINDRKTKGE.

The protein belongs to the TRAFAC class TrmE-Era-EngA-EngB-Septin-like GTPase superfamily. EngA (Der) GTPase family. As to quaternary structure, associates with the 50S ribosomal subunit.

In terms of biological role, GTPase that plays an essential role in the late steps of ribosome biogenesis. In Shewanella denitrificans (strain OS217 / ATCC BAA-1090 / DSM 15013), this protein is GTPase Der.